Consider the following 398-residue polypeptide: Probable aminomethyltransferase (398 aa).

The protein belongs to the GcvT family. As to quaternary structure, the glycine cleavage system is composed of four proteins: P, T, L and H.

The enzyme catalyses N(6)-[(R)-S(8)-aminomethyldihydrolipoyl]-L-lysyl-[protein] + (6S)-5,6,7,8-tetrahydrofolate = N(6)-[(R)-dihydrolipoyl]-L-lysyl-[protein] + (6R)-5,10-methylene-5,6,7,8-tetrahydrofolate + NH4(+). In terms of biological role, the glycine cleavage system catalyzes the degradation of glycine. The sequence is that of Probable aminomethyltransferase from Pyrococcus horikoshii (strain ATCC 700860 / DSM 12428 / JCM 9974 / NBRC 100139 / OT-3).